The chain runs to 527 residues: Glucose-6-phosphate isomerase (527 aa).

Glu-323 serves as the catalytic Proton donor. Residues His-352 and Lys-454 contribute to the active site.

This sequence belongs to the GPI family.

Its subcellular location is the cytoplasm. It catalyses the reaction alpha-D-glucose 6-phosphate = beta-D-fructose 6-phosphate. It participates in carbohydrate biosynthesis; gluconeogenesis. It functions in the pathway carbohydrate degradation; glycolysis; D-glyceraldehyde 3-phosphate and glycerone phosphate from D-glucose: step 2/4. In terms of biological role, catalyzes the reversible isomerization of glucose-6-phosphate to fructose-6-phosphate. This is Glucose-6-phosphate isomerase from Prochlorococcus marinus (strain MIT 9515).